The chain runs to 397 residues: MSKAKFERSKPHVNIGTIGHVDHGKTTLTAAITTVLAQAGGAEAFKYDEIDKAPEEKERGITINTAHVEYETANRHYAHVDCPGHADYVKNMITGAAQMDGAILVCSAADGPMPQTREHILLSSRVGVDHIVVFLNKADMVDDEELLELVEMEVRELLSEYNFPGDDIPVIKGSALVALENPTDEAATACIRELMDAVDSYIPTPERATDKPFLMPVEDVFTITGRGTVATGRVERGVLHVGDEVEVIGLTEERRKTVVTGIEMFRKLLDEAQAGDNIGALLRGIQRTDIERGQVLAQVGTINPHKKFVGQVYVLKKEEGGRHTPFFDGYRPQFYFRTTDVTGSIKLPEGMEMVMPGDHIDMEVELITEIAMDEGLRFAIREGGRTVGSGVVTSIIE.

The tr-type G domain occupies 10–206; that stretch reads KPHVNIGTIG…AVDSYIPTPE (197 aa). The G1 stretch occupies residues 19-26; it reads GHVDHGKT. 19-26 contacts GTP; sequence GHVDHGKT. Thr-26 lines the Mg(2+) pocket. The segment at 60–64 is G2; the sequence is GITIN. Residues 81–84 are G3; the sequence is DCPG. GTP contacts are provided by residues 81–85 and 136–139; these read DCPGH and NKAD. The segment at 136–139 is G4; the sequence is NKAD. The segment at 174 to 176 is G5; the sequence is SAL.

It belongs to the TRAFAC class translation factor GTPase superfamily. Classic translation factor GTPase family. EF-Tu/EF-1A subfamily. In terms of assembly, monomer.

It localises to the cytoplasm. The catalysed reaction is GTP + H2O = GDP + phosphate + H(+). In terms of biological role, GTP hydrolase that promotes the GTP-dependent binding of aminoacyl-tRNA to the A-site of ribosomes during protein biosynthesis. This is Elongation factor Tu from Clostridium perfringens (strain ATCC 13124 / DSM 756 / JCM 1290 / NCIMB 6125 / NCTC 8237 / Type A).